A 426-amino-acid polypeptide reads, in one-letter code: Phosphomethylpyrimidine synthase (426 aa).

Substrate is bound by residues Asn-65, Met-94, Tyr-123, His-162, Ser-184–Gly-186, Asp-225–Arg-228, and Glu-264. His-268 provides a ligand contact to Zn(2+). Residue Tyr-291 coordinates substrate. Residue His-332 coordinates Zn(2+). Positions 408, 411, and 415 each coordinate [4Fe-4S] cluster.

This sequence belongs to the ThiC family. It depends on [4Fe-4S] cluster as a cofactor.

It carries out the reaction 5-amino-1-(5-phospho-beta-D-ribosyl)imidazole + S-adenosyl-L-methionine = 4-amino-2-methyl-5-(phosphooxymethyl)pyrimidine + CO + 5'-deoxyadenosine + formate + L-methionine + 3 H(+). It functions in the pathway cofactor biosynthesis; thiamine diphosphate biosynthesis. Its function is as follows. Catalyzes the synthesis of the hydroxymethylpyrimidine phosphate (HMP-P) moiety of thiamine from aminoimidazole ribotide (AIR) in a radical S-adenosyl-L-methionine (SAM)-dependent reaction. This Methanococcus maripaludis (strain DSM 14266 / JCM 13030 / NBRC 101832 / S2 / LL) protein is Phosphomethylpyrimidine synthase.